The primary structure comprises 199 residues: NADH-quinone oxidoreductase subunit C (199 aa).

This sequence belongs to the complex I 30 kDa subunit family. In terms of assembly, NDH-1 is composed of 14 different subunits. Subunits NuoB, C, D, E, F, and G constitute the peripheral sector of the complex.

The protein resides in the cell inner membrane. The catalysed reaction is a quinone + NADH + 5 H(+)(in) = a quinol + NAD(+) + 4 H(+)(out). Its function is as follows. NDH-1 shuttles electrons from NADH, via FMN and iron-sulfur (Fe-S) centers, to quinones in the respiratory chain. The immediate electron acceptor for the enzyme in this species is believed to be ubiquinone. Couples the redox reaction to proton translocation (for every two electrons transferred, four hydrogen ions are translocated across the cytoplasmic membrane), and thus conserves the redox energy in a proton gradient. The polypeptide is NADH-quinone oxidoreductase subunit C (Cupriavidus taiwanensis (strain DSM 17343 / BCRC 17206 / CCUG 44338 / CIP 107171 / LMG 19424 / R1) (Ralstonia taiwanensis (strain LMG 19424))).